Reading from the N-terminus, the 934-residue chain is Serine/threonine-protein kinase PknD (934 aa).

Positions 4-296 (YELIRLIGKG…ELRQALQPYL (293 aa)) constitute a Protein kinase domain. ATP-binding positions include 10–18 (IGKGGMGEV) and Lys33. Catalysis depends on Asp138, which acts as the Proton acceptor.

This sequence belongs to the protein kinase superfamily. Ser/Thr protein kinase family. As to quaternary structure, interacts with Pkn1. Post-translationally, autophosphorylated on serine and threonine residues.

The catalysed reaction is L-seryl-[protein] + ATP = O-phospho-L-seryl-[protein] + ADP + H(+). It carries out the reaction L-threonyl-[protein] + ATP = O-phospho-L-threonyl-[protein] + ADP + H(+). Its function is as follows. Together with the serine/threonine kinase Pkn1, may play a role in the specific interactions with host proteins during intracellular growth. Autophosphorylates and also phosphorylates Pkn1. The sequence is that of Serine/threonine-protein kinase PknD from Chlamydia trachomatis serovar D (strain ATCC VR-885 / DSM 19411 / UW-3/Cx).